Reading from the N-terminus, the 855-residue chain is Protein translocase subunit SecA (855 aa).

ATP-binding positions include Gln88, 106 to 110, and Asp509; that span reads GEGKT. The tract at residues 815–837 is disordered; that stretch reads EANLQNKFEKKPARNEPCPCGSG. Zn(2+)-binding residues include Cys832, Cys834, Cys843, and Cys844.

It belongs to the SecA family. In terms of assembly, monomer and homodimer. Part of the essential Sec protein translocation apparatus which comprises SecA, SecYEG and auxiliary proteins SecDF-YajC and YidC. The cofactor is Zn(2+).

Its subcellular location is the cell inner membrane. It localises to the cytoplasm. The catalysed reaction is ATP + H2O + cellular proteinSide 1 = ADP + phosphate + cellular proteinSide 2.. Part of the Sec protein translocase complex. Interacts with the SecYEG preprotein conducting channel. Has a central role in coupling the hydrolysis of ATP to the transfer of proteins into and across the cell membrane, serving as an ATP-driven molecular motor driving the stepwise translocation of polypeptide chains across the membrane. The polypeptide is Protein translocase subunit SecA (Campylobacter fetus subsp. fetus (strain 82-40)).